The sequence spans 571 residues: Proline--tRNA ligase (571 aa).

It belongs to the class-II aminoacyl-tRNA synthetase family. ProS type 1 subfamily. As to quaternary structure, homodimer.

It localises to the cytoplasm. The catalysed reaction is tRNA(Pro) + L-proline + ATP = L-prolyl-tRNA(Pro) + AMP + diphosphate. In terms of biological role, catalyzes the attachment of proline to tRNA(Pro) in a two-step reaction: proline is first activated by ATP to form Pro-AMP and then transferred to the acceptor end of tRNA(Pro). As ProRS can inadvertently accommodate and process non-cognate amino acids such as alanine and cysteine, to avoid such errors it has two additional distinct editing activities against alanine. One activity is designated as 'pretransfer' editing and involves the tRNA(Pro)-independent hydrolysis of activated Ala-AMP. The other activity is designated 'posttransfer' editing and involves deacylation of mischarged Ala-tRNA(Pro). The misacylated Cys-tRNA(Pro) is not edited by ProRS. In Glaesserella parasuis serovar 5 (strain SH0165) (Haemophilus parasuis), this protein is Proline--tRNA ligase.